Here is a 255-residue protein sequence, read N- to C-terminus: Keratin-associated protein 10-2 (255 aa).

A run of 22 repeats spans residues 26-30 (CCELP), 36-40 (CCAPA), 57-61 (CCQAA), 79-83 (CCQQS), 89-93 (CCTSS), 99-103 (CCVPV), 104-108 (CCKPV), 109-113 (CCVPV), 114-118 (CCGAS), 120-124 (CCQQS), 130-134 (CCASS), 145-149 (CCKAV), 150-154 (CCVPT), 162-166 (CCQQS), 172-176 (CCTSS), 182-186 (CCVSV), 187-191 (CCKPV), 192-196 (CCKSI), 197-201 (CCVPV), 209-213 (CCQQS), 219-223 (CCTSS), and 224-228 (CCRPS). Residues 26–228 (CCELPCGTPS…CCTSSCCRPS (203 aa)) form a 22 X 5 AA repeats of C-C-X(3) region.

This sequence belongs to the KRTAP type 10 family. Interacts with hair keratins. In terms of tissue distribution, restricted to a narrow region of the hair fiber cuticle, lying approximately 20 cell layers above the apex of the dermal papilla of the hair root; not detected in any other tissues.

Its function is as follows. In the hair cortex, hair keratin intermediate filaments are embedded in an interfilamentous matrix, consisting of hair keratin-associated proteins (KRTAP), which are essential for the formation of a rigid and resistant hair shaft through their extensive disulfide bond cross-linking with abundant cysteine residues of hair keratins. The matrix proteins include the high-sulfur and high-glycine-tyrosine keratins. The protein is Keratin-associated protein 10-2 (KRTAP10-2) of Homo sapiens (Human).